Here is a 490-residue protein sequence, read N- to C-terminus: Protein nucleotidyltransferase YdiU (490 aa).

ATP contacts are provided by glycine 94, glycine 96, arginine 97, lysine 117, aspartate 129, glycine 130, arginine 180, and arginine 187. Aspartate 256 serves as the catalytic Proton acceptor. Positions 257 and 266 each coordinate Mg(2+). An ATP-binding site is contributed by aspartate 266.

It belongs to the SELO family. The cofactor is Mg(2+). Mn(2+) is required as a cofactor.

It catalyses the reaction L-seryl-[protein] + ATP = 3-O-(5'-adenylyl)-L-seryl-[protein] + diphosphate. It carries out the reaction L-threonyl-[protein] + ATP = 3-O-(5'-adenylyl)-L-threonyl-[protein] + diphosphate. The enzyme catalyses L-tyrosyl-[protein] + ATP = O-(5'-adenylyl)-L-tyrosyl-[protein] + diphosphate. The catalysed reaction is L-histidyl-[protein] + UTP = N(tele)-(5'-uridylyl)-L-histidyl-[protein] + diphosphate. It catalyses the reaction L-seryl-[protein] + UTP = O-(5'-uridylyl)-L-seryl-[protein] + diphosphate. It carries out the reaction L-tyrosyl-[protein] + UTP = O-(5'-uridylyl)-L-tyrosyl-[protein] + diphosphate. Its function is as follows. Nucleotidyltransferase involved in the post-translational modification of proteins. It can catalyze the addition of adenosine monophosphate (AMP) or uridine monophosphate (UMP) to a protein, resulting in modifications known as AMPylation and UMPylation. In Clostridium perfringens (strain SM101 / Type A), this protein is Protein nucleotidyltransferase YdiU.